The chain runs to 910 residues: Potassium/sodium hyperpolarization-activated cyclic nucleotide-gated channel 1 (910 aa).

The interval M1–G75 is disordered. Topologically, residues M1–R131 are cytoplasmic. The helical transmembrane segment at F132–I153 threads the bilayer. The Extracellular segment spans residues T154–T162. Residues P163–F183 traverse the membrane as a helical segment. Residues R184–M204 are Cytoplasmic-facing. Residues N205 to F225 form a helical membrane-spanning segment. At L226–T249 the chain is on the extracellular side. Residues K250 to W270 traverse the membrane as a helical; Voltage-sensor segment. The Cytoplasmic portion of the chain corresponds to E271–V284. Residues V285–L307 traverse the membrane as a helical segment. The Extracellular segment spans residues V308 to Q333. N327 carries an N-linked (GlcNAc...) asparagine glycan. The pore-forming intramembrane region spans Y334 to P355. The Selectivity filter signature appears at C347–G351. Topologically, residues V356 to D360 are extracellular. The chain crosses the membrane as a helical span at residues L361–H381. Residues A382 to L910 lie on the Cytoplasmic side of the membrane. 3',5'-cyclic AMP-binding residues include G528, E529, C531, R538, T539, R579, and R582. Disordered stretches follow at residues T634 to A681, Q771 to S791, and Q865 to L910. The segment covering T639–S680 has biased composition (low complexity). Positions G780–S791 are enriched in polar residues. Over residues R875 to A885 the composition is skewed to pro residues. A compositionally biased stretch (basic and acidic residues) spans D900–L910.

This sequence belongs to the potassium channel HCN family. In terms of assembly, homotetramer. Heterotetramer with HCN2. The potassium channel is composed of a homo- or heterotetrameric complex of pore-forming subunits. Interacts with KCNE2. Interacts with the SH3 domain of CSK. In terms of processing, N-glycosylated. Predominantly expressed in brain. Highly expressed in apical dendrites of pyramidal neurons in the cortex, in the layer corresponding to the stratum lacunosum-moleculare in the hippocampus and in axons of basket cells in the cerebellum (at protein level). Expressed in a subset of elongated cells in taste buds.

The protein resides in the cell membrane. The catalysed reaction is Na(+)(in) = Na(+)(out). It carries out the reaction K(+)(in) = K(+)(out). With respect to regulation, activated by cAMP. cAMP binding causes a conformation change that leads to the assembly of an active tetramer and channel opening. Compared to other family members, cAMP has less stimulatory effect on HCN1 because part of the molecules already contain bound cAMP and form homotetramers when cAMP levels are low, this inherent tetramerization in HCN1 results in a weaker response to increased cAMP. Its function is as follows. Hyperpolarization-activated ion channel that are permeable to sodium and potassium ions. Exhibits weak selectivity for potassium over sodium ions. Contributes to the native pacemaker currents in heart (If) and in neurons (Ih). Participates in cerebellar mechanisms of motor learning. May mediate responses to sour stimuli. In Mus musculus (Mouse), this protein is Potassium/sodium hyperpolarization-activated cyclic nucleotide-gated channel 1 (Hcn1).